The chain runs to 1927 residues: Integrin beta-like protein A (1927 aa).

Positions 1 to 20 (MNRILTLFILFISLFIVCEA) are cleaved as a signal peptide. Residues 21 to 1860 (THFRFGTMSW…KENNNKTVLT (1840 aa)) are Extracellular-facing. An N-linked (GlcNAc...) asparagine glycan is attached at N309. One can recognise an EGF-like domain in the interval 425 to 462 (YGEKCDPVDPCVNGESNEGSQGNGKCTCYYGWEGKNCD). Intrachain disulfides connect C435-C450 and C452-C461. The VWFA domain occupies 522 to 709 (EVLVLVDSQP…VLSKAVVKAI (188 aa)). N1122, N1516, N1717, N1723, and N1855 each carry an N-linked (GlcNAc...) asparagine glycan. The helical transmembrane segment at 1861-1881 (GAIAGAAAGAGLLAAGAWFLL) threads the bilayer. Over 1882–1927 (KKSAPPTDAFFGEGAFADGAVSTNPMYEESGRSAINPLYEASSENL) the chain is Cytoplasmic.

Belongs to the SIB family. In terms of assembly, interacts with talA/talin.

The protein resides in the membrane. In terms of biological role, implicated in cellular adhesion to substrate or phagocytic particles. In Dictyostelium discoideum (Social amoeba), this protein is Integrin beta-like protein A (sibA).